The primary structure comprises 254 residues: Low affinity immunoglobulin gamma Fc region receptor III-A (254 aa).

An N-terminal signal peptide occupies residues 1–20 (MWQLLLPTALLLLVSAGMRA). Ig-like C2-type domains lie at 24–105 (PKAV…LEVH) and 107–189 (GWLL…VNIT). Cystine bridges form between C47–C89 and C128–C172. A glycan (N-linked (GlcNAc...) asparagine) is linked at N187. Residues 207 to 229 (YQVSFCLVMVLLFAVDTGLYFSV) form a helical membrane-spanning segment. The interval 234-254 (PSSTSDWKDHKFKWSKDPQDK) is disordered. Residues 239–254 (DWKDHKFKWSKDPQDK) are compositionally biased toward basic and acidic residues.

As to quaternary structure, forms a heterooligomeric complex with ITAM-containing signaling subunits, either a homodimer of CD247, a homodimer of FCER1G or a heterodimer of CD247 and FCER1G, to form a functional receptor complex. Interacts (via transmembrane domain) with signaling subunits; this interaction is a prerequisite for receptor complex expression on the cell surface and intracellular signal transduction. Binds the Fc region of antigen-complexed IgG with a preference for IgG1 and IgG3 isotypes. Interacts with CD2; this interaction is involved in NK cell activation and cytotoxicity. Interacts with S100A4; this interaction inhibits PKC-dependent phosphorylation of FCGR3A. Post-translationally, glycosylated. Glycosylation plays an inhibitory role in the interaction with IgG1 and IgG2. In terms of processing, undergoes rapid ectodomain shedding upon NK cell stimulation. The soluble form is produced by a proteolytic cleavage mediated by ADAM17. Repeated stimulation causes receptor shedding, a mechanism that allows for increased NK cell motility and detachment from opsonized target cells while avoiding activation-induced NK cell apoptosis. As to expression, lymphocytes and monocytes.

It localises to the cell membrane. The protein localises to the secreted. Receptor for the invariable Fc fragment of immunoglobulin gamma (IgG). Optimally activated upon binding of clustered antigen-IgG complexes displayed on cell surfaces, triggers lysis of antibody-coated cells, a process known as antibody-dependent cellular cytotoxicity (ADCC). Does not bind free monomeric IgG, thus avoiding inappropriate effector cell activation in the absence of antigenic trigger. Mediates IgG effector functions on natural killer (NK) cells. Binds antigen-IgG complexes generated upon infection and triggers NK cell-dependent cytokine production and degranulation to limit viral load and propagation. Involved in the generation of memory-like adaptive NK cells capable to produce high amounts of IFNG and to efficiently eliminate virus-infected cells via ADCC. Regulates NK cell survival and proliferation, in particular by preventing NK cell progenitor apoptosis. Fc-binding subunit that associates with CD247 and/or FCER1G adapters to form functional signaling complexes. Following the engagement of antigen-IgG complexes, triggers phosphorylation of immunoreceptor tyrosine-based activation motif (ITAM)-containing adapters with subsequent activation of phosphatidylinositol 3-kinase signaling and sustained elevation of intracellular calcium that ultimately drive NK cell activation. The ITAM-dependent signaling coupled to receptor phosphorylation by PKC mediates robust intracellular calcium flux that leads to production of pro-inflammatory cytokines, whereas in the absence of receptor phosphorylation it mainly activates phosphatidylinositol 3-kinase signaling leading to cell degranulation. Costimulates NK cells and trigger lysis of target cells independently of IgG binding. Mediates the antitumor activities of therapeutic antibodies. Upon ligation on monocytes triggers TNFA-dependent ADCC of IgG-coated tumor cells. Mediates enhanced ADCC in response to afucosylated IgGs. This Papio anubis (Olive baboon) protein is Low affinity immunoglobulin gamma Fc region receptor III-A (FCGR3A).